We begin with the raw amino-acid sequence, 122 residues long: Small ribosomal subunit protein uS13 (122 aa).

The tract at residues 99–122 (RGQRTHTNARTRKGPAKAIAGKKK) is disordered.

The protein belongs to the universal ribosomal protein uS13 family. Part of the 30S ribosomal subunit. Forms a loose heterodimer with protein S19. Forms two bridges to the 50S subunit in the 70S ribosome.

In terms of biological role, located at the top of the head of the 30S subunit, it contacts several helices of the 16S rRNA. In the 70S ribosome it contacts the 23S rRNA (bridge B1a) and protein L5 of the 50S subunit (bridge B1b), connecting the 2 subunits; these bridges are implicated in subunit movement. Contacts the tRNAs in the A and P-sites. The chain is Small ribosomal subunit protein uS13 from Bradyrhizobium diazoefficiens (strain JCM 10833 / BCRC 13528 / IAM 13628 / NBRC 14792 / USDA 110).